Here is a 77-residue protein sequence, read N- to C-terminus: PTS system N-acetylglucosamine-specific EIIB component (77 aa).

The PTS EIIB type-1 domain occupies 2–77; sequence ASKAEKIVAG…PIAAEIEDMM (76 aa). The active-site Phosphocysteine intermediate; for EIIB activity is C24.

It catalyses the reaction N(pros)-phospho-L-histidyl-[protein] + N-acetyl-D-glucosamine(out) = N-acetyl-D-glucosamine 6-phosphate(in) + L-histidyl-[protein]. Its function is as follows. The phosphoenolpyruvate-dependent sugar phosphotransferase system (sugar PTS), a major carbohydrate active transport system, catalyzes the phosphorylation of incoming sugar substrates concomitantly with their translocation across the cell membrane. This system is involved in N-acetylglucosamine (GlcNAc) transport. This chain is PTS system N-acetylglucosamine-specific EIIB component, found in Streptomyces coelicolor (strain ATCC BAA-471 / A3(2) / M145).